The chain runs to 585 residues: Nitrogen permease regulator 3-like protein (585 aa).

Residues 117 to 157 (GEWAKRRKPRTTVESNASSSHLVSKPESSHPSTGSFEVKSS) are disordered. Over residues 128–138 (TVESNASSSHL) the composition is skewed to polar residues. Residues 148 to 157 (STGSFEVKSS) are compositionally biased toward low complexity.

Belongs to the NPR3 family.

In Schizosaccharomyces pombe (strain 972 / ATCC 24843) (Fission yeast), this protein is Nitrogen permease regulator 3-like protein.